We begin with the raw amino-acid sequence, 182 residues long: Ribosome-recycling factor (182 aa).

Belongs to the RRF family.

Its subcellular location is the cytoplasm. Responsible for the release of ribosomes from messenger RNA at the termination of protein biosynthesis. May increase the efficiency of translation by recycling ribosomes from one round of translation to another. This Hydrogenobaculum sp. (strain Y04AAS1) protein is Ribosome-recycling factor.